A 91-amino-acid chain; its full sequence is CRISPR-associated endoribonuclease Cas2 2 (91 aa).

Residue Asp10 coordinates Mg(2+).

It belongs to the CRISPR-associated endoribonuclease Cas2 protein family. Homodimer, forms a heterotetramer with a Cas1 homodimer. The cofactor is Mg(2+).

Functionally, CRISPR (clustered regularly interspaced short palindromic repeat), is an adaptive immune system that provides protection against mobile genetic elements (viruses, transposable elements and conjugative plasmids). CRISPR clusters contain sequences complementary to antecedent mobile elements and target invading nucleic acids. CRISPR clusters are transcribed and processed into CRISPR RNA (crRNA). Functions as a ssRNA-specific endoribonuclease. Involved in the integration of spacer DNA into the CRISPR cassette. This chain is CRISPR-associated endoribonuclease Cas2 2, found in Thermodesulfovibrio yellowstonii (strain ATCC 51303 / DSM 11347 / YP87).